A 383-amino-acid chain; its full sequence is Alanine racemase (383 aa).

Lysine 50 functions as the Proton acceptor; specific for D-alanine in the catalytic mechanism. An N6-(pyridoxal phosphate)lysine modification is found at lysine 50. Arginine 151 provides a ligand contact to substrate. The active-site Proton acceptor; specific for L-alanine is the tyrosine 279. Residue methionine 327 participates in substrate binding.

This sequence belongs to the alanine racemase family. Pyridoxal 5'-phosphate is required as a cofactor.

It carries out the reaction L-alanine = D-alanine. It functions in the pathway amino-acid biosynthesis; D-alanine biosynthesis; D-alanine from L-alanine: step 1/1. Catalyzes the interconversion of L-alanine and D-alanine. May also act on other amino acids. The polypeptide is Alanine racemase (alr) (Chlorobaculum tepidum (strain ATCC 49652 / DSM 12025 / NBRC 103806 / TLS) (Chlorobium tepidum)).